Consider the following 29-residue polypeptide: Cyclotide mden-A (29 aa).

Positions 1–29 (GIPTCGETCTLGTCNTPGCTCSWPICTKN) form a cross-link, cyclopeptide (Gly-Asn). Cystine bridges form between Cys-5–Cys-19, Cys-9–Cys-21, and Cys-14–Cys-26.

The protein belongs to the cyclotide family. Moebius subfamily. This is a cyclic peptide.

Functionally, probably participates in a plant defense mechanism. This is Cyclotide mden-A from Melicytus dentatus (Tree violet).